A 236-amino-acid chain; its full sequence is Small ribosomal subunit protein uS2c (236 aa).

It belongs to the universal ribosomal protein uS2 family.

It localises to the plastid. The protein resides in the chloroplast. The polypeptide is Small ribosomal subunit protein uS2c (rps2) (Lotus japonicus (Lotus corniculatus var. japonicus)).